A 142-amino-acid chain; its full sequence is Large ribosomal subunit protein uL13 (142 aa).

The protein belongs to the universal ribosomal protein uL13 family. In terms of assembly, part of the 50S ribosomal subunit.

Functionally, this protein is one of the early assembly proteins of the 50S ribosomal subunit, although it is not seen to bind rRNA by itself. It is important during the early stages of 50S assembly. This chain is Large ribosomal subunit protein uL13, found in Xylella fastidiosa (strain 9a5c).